Consider the following 463-residue polypeptide: Argininosuccinate lyase (463 aa).

It belongs to the lyase 1 family. Argininosuccinate lyase subfamily.

Its subcellular location is the cytoplasm. The enzyme catalyses 2-(N(omega)-L-arginino)succinate = fumarate + L-arginine. The protein operates within amino-acid biosynthesis; L-arginine biosynthesis; L-arginine from L-ornithine and carbamoyl phosphate: step 3/3. The polypeptide is Argininosuccinate lyase (Streptococcus pneumoniae (strain 70585)).